Reading from the N-terminus, the 597-residue chain is Aspartate--tRNA(Asp/Asn) ligase (597 aa).

E175 serves as a coordination point for L-aspartate. The interval 199 to 202 (QLFK) is aspartate. Residue R221 coordinates L-aspartate. Residues 221 to 223 (RDE) and Q230 each bind ATP. H453 provides a ligand contact to L-aspartate. E487 is an ATP binding site. R494 is a binding site for L-aspartate. 539 to 542 (GWDR) is a binding site for ATP. The tract at residues 562-597 (SGGGVDPLTDAPAPITPEQRKESGIDAKPKKKETKN) is disordered. A compositionally biased stretch (basic and acidic residues) spans 579 to 589 (EQRKESGIDAK).

It belongs to the class-II aminoacyl-tRNA synthetase family. Type 1 subfamily. In terms of assembly, homodimer.

The protein resides in the cytoplasm. The catalysed reaction is tRNA(Asx) + L-aspartate + ATP = L-aspartyl-tRNA(Asx) + AMP + diphosphate. In terms of biological role, aspartyl-tRNA synthetase with relaxed tRNA specificity since it is able to aspartylate not only its cognate tRNA(Asp) but also tRNA(Asn). Reaction proceeds in two steps: L-aspartate is first activated by ATP to form Asp-AMP and then transferred to the acceptor end of tRNA(Asp/Asn). In Corynebacterium kroppenstedtii (strain DSM 44385 / JCM 11950 / CIP 105744 / CCUG 35717), this protein is Aspartate--tRNA(Asp/Asn) ligase.